Consider the following 67-residue polypeptide: Large ribosomal subunit protein uL29 (67 aa).

The protein belongs to the universal ribosomal protein uL29 family.

The sequence is that of Large ribosomal subunit protein uL29 from Rubrobacter xylanophilus (strain DSM 9941 / JCM 11954 / NBRC 16129 / PRD-1).